Consider the following 534-residue polypeptide: Arginine--tRNA ligase (534 aa).

The short motif at 120-130 (ANPTGFLHLGH) is the 'HIGH' region element.

Belongs to the class-I aminoacyl-tRNA synthetase family. As to quaternary structure, monomer.

Its subcellular location is the cytoplasm. The enzyme catalyses tRNA(Arg) + L-arginine + ATP = L-arginyl-tRNA(Arg) + AMP + diphosphate. This chain is Arginine--tRNA ligase, found in Mesomycoplasma hyopneumoniae (strain 232) (Mycoplasma hyopneumoniae).